Reading from the N-terminus, the 582-residue chain is Actin-histidine N-methyltransferase (582 aa).

S-adenosyl-L-methionine is bound by residues Arg-75, 104–106, Arg-254, 275–279, and 325–327; these read EGF, DMCNH, and NGF. The SET domain occupies 94–314; that stretch reads DGFELVEFPE…SGEQIYIFYG (221 aa). Residues 550–582 form a disordered region; the sequence is DKDLLPNGTKSENDSFLAEDNQQETGNAKDFCS.

This sequence belongs to the class V-like SAM-binding methyltransferase superfamily. SETD3 actin-histidine methyltransferase family.

The protein resides in the cytoplasm. It carries out the reaction L-histidyl-[protein] + S-adenosyl-L-methionine = N(tele)-methyl-L-histidyl-[protein] + S-adenosyl-L-homocysteine + H(+). Its function is as follows. Protein-histidine N-methyltransferase that specifically mediates 3-methylhistidine (tele-methylhistidine) methylation of actin at 'His-73'. Does not have protein-lysine N-methyltransferase activity and probably only catalyzes histidine methylation of actin. The sequence is that of Actin-histidine N-methyltransferase from Xenopus tropicalis (Western clawed frog).